The sequence spans 188 residues: FMN-dependent NADPH-azoreductase (188 aa).

It belongs to the azoreductase type 2 family. As to quaternary structure, homotetramer. FMN is required as a cofactor.

Functionally, catalyzes the reductive cleavage of azo bond in aromatic azo compounds to the corresponding amines. Requires NADPH, but not NADH, as an electron donor for its activity. This Staphylococcus aureus (strain MSSA476) protein is FMN-dependent NADPH-azoreductase (azo1).